The following is a 110-amino-acid chain: MSVVIRLARAGTKKRPVYHVVVADSRFPRDGRFIERLGHFNPLLPKDSEARLKLDLDKVKAWVAKGAQPSDRVARFLDAAGVKKREARNNPEKAVPRKERKAAAEAAAKK.

The tract at residues 84 to 110 (KREARNNPEKAVPRKERKAAAEAAAKK) is disordered.

The protein belongs to the bacterial ribosomal protein bS16 family.

The chain is Small ribosomal subunit protein bS16 from Rhodopseudomonas palustris (strain BisB18).